Consider the following 386-residue polypeptide: ABC transporter permease protein NatB (386 aa).

The next 6 helical transmembrane spans lie at 19–39 (TILLTILVPMIMMLGLVFFYE), 172–192 (AIMLSAILPMLILTSIVSGAM), 226–246 (WLAVSTFGVASGVFALVFLIL), 273–293 (ALIIVLSALLISAMELFISIM), 300–320 (AQSYMSLVVFLPVFPMFFIFS), and 353–373 (ATILSTSGTIAVLIAIFFLLA).

In terms of assembly, the complex is composed of NatA and NatB.

The protein resides in the cell membrane. It catalyses the reaction Na(+)(in) + ATP + H2O = Na(+)(out) + ADP + phosphate + H(+). Part of an ABC transporter that catalyzes ATP-dependent electrogenic sodium extrusion. This is ABC transporter permease protein NatB from Bacillus subtilis (strain 168).